We begin with the raw amino-acid sequence, 386 residues long: Ferredoxin--NADP reductase (386 aa).

The CpcD-like domain occupies 9 to 67 (SRMFRYEVVGLRQTAETEKTNYAIRNSGSQFFNVPYDRMNQFMQQITRWGGKIVSIQPL). The FAD-binding FR-type domain maps to 104 to 228 (NNPCIGKVIS…TGPVGKEMLL (125 aa)). Residues 163–166 (RLYS), 184–186 (CVR), Tyr-190, 202–204 (VCS), and Thr-243 contribute to the FAD site. NADP(+) contacts are provided by Ser-166 and Arg-186. Residues Thr-243, 275 to 276 (VA), 305 to 306 (SR), 315 to 319 (KMYIQ), 344 to 345 (GL), and Glu-384 contribute to the NADP(+) site.

This sequence belongs to the ferredoxin--NADP reductase type 1 family. The cofactor is FAD.

Its subcellular location is the cellular thylakoid membrane. The enzyme catalyses 2 reduced [2Fe-2S]-[ferredoxin] + NADP(+) + H(+) = 2 oxidized [2Fe-2S]-[ferredoxin] + NADPH. The sequence is that of Ferredoxin--NADP reductase (petH) from Thermosynechococcus vestitus (strain NIES-2133 / IAM M-273 / BP-1).